The following is a 715-amino-acid chain: Arginine kinase (715 aa).

Approximate repeat units lie at residues 1–366 (MADP…IAKK) and 367–715 (RSVF…KSTK). The Phosphagen kinase N-terminal 1 domain occupies 11 to 95 (KSKNAFPDPL…FDAIIEDYHS (85 aa)). Residue 68–72 (GVGVY) coordinates substrate. Positions 123–362 (YIRSTRIRVA…KALMELEKEA (240 aa)) constitute a Phosphagen kinase C-terminal 1 domain. ATP-binding positions include 126–130 (STRIR) and histidine 189. Glutamate 229 is a substrate binding site. Arginine 233 provides a ligand contact to ATP. Cysteine 275 provides a ligand contact to substrate. Residues 284 to 288 (RASVH) and 312 to 317 (RGIHGE) each bind ATP. Residue glutamate 317 participates in substrate binding. The region spanning 365 to 447 (KKRSVFPEVL…FDKIVEDYHS (83 aa)) is the Phosphagen kinase N-terminal 2 domain. Positions 475–714 (YIRSTRIRVA…KKLLEIEKST (240 aa)) constitute a Phosphagen kinase C-terminal 2 domain.

It belongs to the ATP:guanido phosphotransferase family. As to quaternary structure, monomer.

The catalysed reaction is L-arginine + ATP = N(omega)-phospho-L-arginine + ADP + H(+). The polypeptide is Arginine kinase (Anthopleura japonica (Sea anemone)).